We begin with the raw amino-acid sequence, 554 residues long: Estrogen receptor beta (554 aa).

The modulating stretch occupies residues 25 to 173; it reads TEIKNSPAGV…NPGSKKDAHF (149 aa). NR C4-type zinc fingers lie at residues 174 to 194 and 210 to 234; these read CAVC…CEGC and CPAT…LRKC. Positions 174 to 239 form a DNA-binding region, nuclear receptor; it reads CAVCSDYASG…RLRKCYEVGM (66 aa). An NR LBD domain is found at 289-521; sequence SPEQFVLTLL…DLLLEMLNAH (233 aa). The segment at 529–554 is disordered; sequence PLATHPEFGPLEQMEPGESLRKGEPQ.

It belongs to the nuclear hormone receptor family. NR3 subfamily. Binds DNA as a homodimer. Can form a heterodimer with ER-alpha. Brain, pituitary, skeletal muscle, liver, adrenal, kidney, intestine and ovary.

It is found in the nucleus. Functionally, binds estrogens with an affinity similar to that of ER-alpha, and activates expression of reporter genes containing estrogen response elements (ERE) in an estrogen-dependent manner. Locally synthesized estrogens may act via ER beta, in addition to ER alpha, to mediate seasonal or developmental effects on nearby song nuclei. The protein is Estrogen receptor beta (ESR2) of Sturnus vulgaris (Starling).